Consider the following 231-residue polypeptide: uncharacterized protein (231 aa).

This is an uncharacterized protein from Haemophilus influenzae (strain ATCC 51907 / DSM 11121 / KW20 / Rd).